The chain runs to 87 residues: HssA/B-like protein 31 (87 aa).

This sequence belongs to the hssA/B family.

This is HssA/B-like protein 31 (hssl31) from Dictyostelium discoideum (Social amoeba).